Consider the following 269-residue polypeptide: MISLKNFGLLFWKRFSENKLNQVAGALTYSTMLAMVPLVMVIFSIFSAFPVFNEVTGELKEMIFTNFAPSASDMVGEYIDQFVSNSKKMSAVGIVSLIAVALMLINNIDRTLNSIWHNSQSRSPLSSFAIYWMILTLGPLIIGVSIGISSYIKIMFEQSEHLSLGLKLLSFVPFLFTWFIFTLIYTVVPNKKVKIKHSAYGAFLAAIFFTLGKQAFTWYIVTFPSYQLIYGAMATLPIMLLWIQISWLVVLVGAQLASTLDEIGEQIEQ.

Transmembrane regions (helical) follow at residues 32–52 (MLAMVPLVMVIFSIFSAFPVF), 89–109 (MSAVGIVSLIAVALMLINNID), 128–148 (FAIYWMILTLGPLIIGVSIGI), 168–188 (LLSFVPFLFTWFIFTLIYTVV), 203–223 (FLAAIFFTLGKQAFTWYIVTF), and 232–252 (AMATLPIMLLWIQISWLVVLV).

The protein belongs to the UPF0761 family.

The protein localises to the cell inner membrane. The sequence is that of UPF0761 membrane protein HI_0276 from Haemophilus influenzae (strain ATCC 51907 / DSM 11121 / KW20 / Rd).